The chain runs to 328 residues: Peroxidase 25 (328 aa).

Residues 1 to 26 (MGVYLGKYCYIMIIMLVLVLGKEVRS) form the signal peptide. Disulfide bonds link Cys38/Cys114, Cys71/Cys76, Cys120/Cys324, and Cys198/Cys230. The Proton acceptor role is filled by His69. Ca(2+) contacts are provided by Asp70, Val73, Gly75, Asp77, and Ser79. Pro161 provides a ligand contact to substrate. His191 is a heme b binding site. Thr192 provides a ligand contact to Ca(2+). N-linked (GlcNAc...) asparagine glycosylation occurs at Asn207. Ca(2+) contacts are provided by Asp243, Ser246, and Asp251.

The protein belongs to the peroxidase family. Classical plant (class III) peroxidase subfamily. It depends on heme b as a cofactor. Ca(2+) is required as a cofactor.

Its subcellular location is the secreted. It catalyses the reaction 2 a phenolic donor + H2O2 = 2 a phenolic radical donor + 2 H2O. In terms of biological role, removal of H(2)O(2), oxidation of toxic reductants, biosynthesis and degradation of lignin, suberization, auxin catabolism, response to environmental stresses such as wounding, pathogen attack and oxidative stress. These functions might be dependent on each isozyme/isoform in each plant tissue. This is Peroxidase 25 (PER25) from Arabidopsis thaliana (Mouse-ear cress).